The following is a 1503-amino-acid chain: DNA-directed RNA polymerase subunit beta' (1503 aa).

Positions 60, 62, 75, and 78 each coordinate Zn(2+). Mg(2+) contacts are provided by D626, D628, and D630. 4 residues coordinate Zn(2+): C1002, C1075, C1082, and C1085. Positions 1439–1503 are disordered; sequence EESQQAEEAP…EEEDNDLPAF (65 aa). The span at 1486–1503 shows a compositional bias: acidic residues; sequence GDNDQSDAEEEDNDLPAF.

This sequence belongs to the RNA polymerase beta' chain family. The RNAP catalytic core consists of 2 alpha, 1 beta, 1 beta' and 1 omega subunit. When a sigma factor is associated with the core the holoenzyme is formed, which can initiate transcription. Requires Mg(2+) as cofactor. Zn(2+) is required as a cofactor.

It catalyses the reaction RNA(n) + a ribonucleoside 5'-triphosphate = RNA(n+1) + diphosphate. Its function is as follows. DNA-dependent RNA polymerase catalyzes the transcription of DNA into RNA using the four ribonucleoside triphosphates as substrates. The protein is DNA-directed RNA polymerase subunit beta' of Chloroflexus aurantiacus (strain ATCC 29364 / DSM 637 / Y-400-fl).